A 120-amino-acid chain; its full sequence is Synaptobrevin (120 aa).

The interval 1-38 is disordered; the sequence is MSAPPSGPAPDAQGGAPGQPTGPPGAPPNTTSNRRLQQ. The Cytoplasmic segment spans residues 1-98; that stretch reads MSAPPSGPAP…KRKYWWKNCK (98 aa). A compositionally biased stretch (polar residues) spans 29 to 38; sequence NTTSNRRLQQ. The 61-residue stretch at 35–95 folds into the v-SNARE coiled-coil homology domain; the sequence is RLQQTQAQVE…AKLKRKYWWK (61 aa). The chain crosses the membrane as a helical; Anchor for type IV membrane protein span at residues 99–118; it reads MMIMLGGIGAIIVIVIIIYF. Residues 119–120 are Vesicular-facing; that stretch reads FT.

The protein belongs to the synaptobrevin family. Nervous system specific.

The protein resides in the cytoplasmic vesicle. The protein localises to the secretory vesicle. Its subcellular location is the synaptic vesicle membrane. It localises to the synapse. It is found in the synaptosome. Its function is as follows. This protein may play a role in packaging, transport or release of neurotransmitters. The sequence is that of Synaptobrevin from Tetronarce californica (Pacific electric ray).